The following is a 349-amino-acid chain: MGASENLGQGPPPPHSRKRARELVLGLQDEICNELESLDGGQSFRTDSWERPEGGGGRSKVMREGRVFEQGGVNFSEVHGEELPPSILNQRPEAKGHPWFATGTSMVLHPRNPYVPTIHLNYRYFEAGPVWWFGGGADLTPFYPYLEDARHFHRVHKQACDTVGPELHKVFKPWCDEYFYLKHRGETRGVGGIFYDYQDGSGVLYKGQNSEGPAAQVSRELGPHPKSWEQLFELAKACGKAFLPAYVPIVEKRQEQAYGDRERQFQLYRRGRYAEFNLVWDRGTIFGLQTNGRTESILMSLPPLARWEYGYVAPADSREALLTDLFTRPQNWFEDATLEERCRPHQAVD.

Disordered stretches follow at residues 1–21 and 37–60; these read MGAS…KRAR and SLDG…GRSK. Residue serine 105 coordinates substrate. A divalent metal cation-binding residues include histidine 109 and histidine 119. Residue histidine 119 is the Proton donor of the active site. Residue 121–123 participates in substrate binding; it reads NYR. The a divalent metal cation site is built by histidine 153 and histidine 183. The important for dimerization stretch occupies residues 273–308; the sequence is YAEFNLVWDRGTIFGLQTNGRTESILMSLPPLARWE.

The protein belongs to the aerobic coproporphyrinogen-III oxidase family. As to quaternary structure, homodimer. A divalent metal cation serves as cofactor.

The protein resides in the cytoplasm. The enzyme catalyses coproporphyrinogen III + O2 + 2 H(+) = protoporphyrinogen IX + 2 CO2 + 2 H2O. Its pathway is porphyrin-containing compound metabolism; protoporphyrin-IX biosynthesis; protoporphyrinogen-IX from coproporphyrinogen-III (O2 route): step 1/1. Its function is as follows. Involved in the heme and chlorophyll biosynthesis. Catalyzes the aerobic oxidative decarboxylation of propionate groups of rings A and B of coproporphyrinogen-III to yield the vinyl groups in protoporphyrinogen-IX. This is Oxygen-dependent coproporphyrinogen-III oxidase from Prochlorococcus marinus (strain MIT 9313).